Here is a 989-residue protein sequence, read N- to C-terminus: Presequence protease, mitochondrial (989 aa).

Residues 1-16 (MLRFQRFASSYAQAQA) constitute a mitochondrion transit peptide. Histidine 84 contributes to the Zn(2+) binding site. Glutamate 87 acts as the Proton acceptor in catalysis. A Zn(2+)-binding site is contributed by histidine 88. Glutamate 160 is a catalytic residue. Residue glutamate 185 coordinates Zn(2+). Residue serine 920 is modified to Phosphoserine. An ATP-binding site is contributed by 972 to 979 (GPGIEGKT).

Belongs to the peptidase M16 family. PreP subfamily. Monomer and homodimer; homodimerization is induced by binding of the substrate. Requires Zn(2+) as cofactor.

Its subcellular location is the mitochondrion intermembrane space. It is found in the mitochondrion matrix. Its activity is regulated as follows. Activated by nucleotides, including ATP, GTP, CTP, UTP, and ADP. Activated by copper, manganese, calcium and magnesium ions; copper and manganese restore activity following inactivation by EDTA (ethylenediaminetetraacetic acid). Inhibited by metal chelators including EDTA, EGTA (ethylene glycol bis(2-aminoethyl)tetraacetic acid), and 1,10-phenanthroline. Inhibited by copper, zinc, and iron ions. Also inhibited by dithiothreitol p-mercuribenzenesulfonic acid, N-ethylmaleimide, protoporphyrin, hemin, protamine and triarginine. Degrades mitochondrial transit peptides after their cleavage in the intermembrane space or in the matrix, and presequence peptides; clearance of these peptides is required to keep the presequence processing machinery running. Preferentially cleaves the N-terminal side of paired basic amino acid residues. Also degrades other unstructured peptides. May function as an ATP-dependent peptidase as opposed to a metalloendopeptidase. The chain is Presequence protease, mitochondrial from Saccharomyces cerevisiae (strain ATCC 204508 / S288c) (Baker's yeast).